A 109-amino-acid chain; its full sequence is Putative double-stranded DNA mimic protein YciU (109 aa).

The protein belongs to the putative dsDNA mimic protein family.

Functionally, may act as a double-stranded DNA (dsDNA) mimic. Probably regulates the activity of a dsDNA-binding protein. The protein is Putative double-stranded DNA mimic protein YciU of Salmonella paratyphi B (strain ATCC BAA-1250 / SPB7).